The sequence spans 366 residues: ERCC4 domain-containing protein EP364R (366 aa).

The 99-residue stretch at 3 to 101 (FLVADHREHH…QLYFFVEGPA (99 aa)) folds into the ERCC4 domain. 2 stretches are compositionally biased toward polar residues: residues 320 to 331 (RPTMQVATQPAA) and 349 to 366 (PTGH…TVRC). The interval 320 to 366 (RPTMQVATQPAATQPLHKVSDDASSDASSPTGHQTLSKEMSLNTVRC) is disordered.

It belongs to the asfivirus EP364R family.

Plays a role in the inhibition of type I interferon signaling pathway. Mechanistically, specifically interacts with 2',3'-cGAMP and cleaves it via its phosphodiesterase activity. In turn, prevents 2',3'-cGAMP interaction with host ER-resident STING1 leading to inhibition of downstream signaling pathway and type I interferon production. This chain is ERCC4 domain-containing protein EP364R, found in Ornithodoros (relapsing fever ticks).